A 183-amino-acid chain; its full sequence is Capsid protein (183 aa).

The interval 143–183 (LPETTVVRRRGRSPRRRTPSPRRRRSQSPRRRRSQSRESQC) is disordered. Positions 149 to 176 (VRRRGRSPRRRTPSPRRRRSQSPRRRRS) are enriched in basic residues. S155, S162, and S170 each carry phosphoserine; by host. One copy of the 1; half-length repeat lies at 155–161 (SPRRRTP). A 3 X 8 AA repeats of S-P-R-R-R-[PR]-S-Q region spans residues 155 to 177 (SPRRRTPSPRRRRSQSPRRRRSQ). The Bipartite nuclear localization signal motif lies at 158–175 (RRTPSPRRRRSQSPRRRR). 2 tandem repeats follow at residues 162-169 (SPRRRRSQ) and 170-177 (SPRRRRSQ). An RNA binding region spans residues 177-183 (QSRESQC).

The protein belongs to the orthohepadnavirus core antigen family. As to quaternary structure, homodimerizes, then multimerizes. Interacts with cytosol exposed regions of viral L glycoprotein present in the reticulum-to-Golgi compartment. Interacts with human FLNB. Phosphorylated form interacts with host importin alpha; this interaction depends on the exposure of the NLS, which itself depends upon genome maturation and/or phosphorylation of the capsid protein. Interacts with host NUP153. In terms of processing, phosphorylated by host SRPK1, SRPK2, and maybe protein kinase C or GAPDH. Phosphorylation is critical for pregenomic RNA packaging. Protein kinase C phosphorylation is stimulated by HBx protein and may play a role in transport of the viral genome to the nucleus at the late step during the viral replication cycle.

It is found in the virion. Its subcellular location is the host cytoplasm. In terms of biological role, self assembles to form an icosahedral capsid. Most capsids appear to be large particles with an icosahedral symmetry of T=4 and consist of 240 copies of capsid protein, though a fraction forms smaller T=3 particles consisting of 180 capsid proteins. Entering capsids are transported along microtubules to the nucleus. Phosphorylation of the capsid is thought to induce exposure of nuclear localization signal in the C-terminal portion of the capsid protein that allows binding to the nuclear pore complex via the importin (karyopherin-) alpha and beta. Capsids are imported in intact form through the nuclear pore into the nuclear basket, where it probably binds NUP153. Only capsids that contain the mature viral genome can release the viral DNA and capsid protein into the nucleoplasm. Immature capsids get stuck in the basket. Capsids encapsulate the pre-genomic RNA and the P protein. Pre-genomic RNA is reverse-transcribed into DNA while the capsid is still in the cytoplasm. The capsid can then either be directed to the nucleus, providing more genomes for transcription, or bud through the endoplasmic reticulum to provide new virions. This Homo sapiens (Human) protein is Capsid protein.